A 326-amino-acid polypeptide reads, in one-letter code: Lipoyl synthase (326 aa).

Positions 68, 73, 79, 94, 98, 101, and 308 each coordinate [4Fe-4S] cluster. A Radical SAM core domain is found at 80–297; the sequence is FNHGTATFMI…KDVAMGLGFS (218 aa).

Belongs to the radical SAM superfamily. Lipoyl synthase family. It depends on [4Fe-4S] cluster as a cofactor.

Its subcellular location is the cytoplasm. It carries out the reaction [[Fe-S] cluster scaffold protein carrying a second [4Fe-4S](2+) cluster] + N(6)-octanoyl-L-lysyl-[protein] + 2 oxidized [2Fe-2S]-[ferredoxin] + 2 S-adenosyl-L-methionine + 4 H(+) = [[Fe-S] cluster scaffold protein] + N(6)-[(R)-dihydrolipoyl]-L-lysyl-[protein] + 4 Fe(3+) + 2 hydrogen sulfide + 2 5'-deoxyadenosine + 2 L-methionine + 2 reduced [2Fe-2S]-[ferredoxin]. It participates in protein modification; protein lipoylation via endogenous pathway; protein N(6)-(lipoyl)lysine from octanoyl-[acyl-carrier-protein]: step 2/2. Catalyzes the radical-mediated insertion of two sulfur atoms into the C-6 and C-8 positions of the octanoyl moiety bound to the lipoyl domains of lipoate-dependent enzymes, thereby converting the octanoylated domains into lipoylated derivatives. The sequence is that of Lipoyl synthase from Aeromonas salmonicida (strain A449).